Here is a 92-residue protein sequence, read N- to C-terminus: CRISPR-associated endoribonuclease Cas2 (92 aa).

D9 lines the Mg(2+) pocket.

The protein belongs to the CRISPR-associated endoribonuclease Cas2 protein family. In terms of assembly, homodimer, forms a heterotetramer with a Cas1 homodimer. The cofactor is Mg(2+).

In terms of biological role, CRISPR (clustered regularly interspaced short palindromic repeat), is an adaptive immune system that provides protection against mobile genetic elements (viruses, transposable elements and conjugative plasmids). CRISPR clusters contain sequences complementary to antecedent mobile elements and target invading nucleic acids. CRISPR clusters are transcribed and processed into CRISPR RNA (crRNA). Functions as a ssRNA-specific endoribonuclease. Involved in the integration of spacer DNA into the CRISPR cassette. The protein is CRISPR-associated endoribonuclease Cas2 of Aeropyrum pernix (strain ATCC 700893 / DSM 11879 / JCM 9820 / NBRC 100138 / K1).